Here is a 554-residue protein sequence, read N- to C-terminus: Folate synthesis bifunctional protein, mitochondrial (554 aa).

The transit peptide at 1-42 directs the protein to the mitochondrion; that stretch reads MAPLLSQTLIHTGRFLLRRFLEPPPAVISAVAASRVCFHRYY. The segment at 90–215 is HPPK; it reads VIALGSNIGN…SFVLAPLVDL (126 aa). Residues 273–541 form the Pterin-binding domain; it reads THVMGILNLT…NVRHNADAAK (269 aa). The segment at 275–554 is DHPS; sequence VMGILNLTPD…AMLRRRRSKG (280 aa). Asn280 provides a ligand contact to Mg(2+). (7,8-dihydropterin-6-yl)methyl diphosphate contacts are provided by residues Thr320, Asp357, Asn376, Asp449, Lys494, and 529–531; that span reads RVH.

In the N-terminal section; belongs to the HPPK family. The protein in the C-terminal section; belongs to the DHPS family. The cofactor is Mg(2+). As to expression, ubiquitous.

The protein localises to the mitochondrion. The catalysed reaction is 6-hydroxymethyl-7,8-dihydropterin + ATP = (7,8-dihydropterin-6-yl)methyl diphosphate + AMP + H(+). It carries out the reaction (7,8-dihydropterin-6-yl)methyl diphosphate + 4-aminobenzoate = 7,8-dihydropteroate + diphosphate. It participates in cofactor biosynthesis; tetrahydrofolate biosynthesis; 2-amino-4-hydroxy-6-hydroxymethyl-7,8-dihydropteridine diphosphate from 7,8-dihydroneopterin triphosphate: step 4/4. Its pathway is cofactor biosynthesis; tetrahydrofolate biosynthesis; 7,8-dihydrofolate from 2-amino-4-hydroxy-6-hydroxymethyl-7,8-dihydropteridine diphosphate and 4-aminobenzoate: step 1/2. Functionally, catalyzes the first two consecutive steps of tetrahydrofolate biosynthesis. This Arabidopsis thaliana (Mouse-ear cress) protein is Folate synthesis bifunctional protein, mitochondrial.